Consider the following 219-residue polypeptide: Probable transcription factor At1g55950 (219 aa).

The tract at residues 9–77 (ASHSLKSLMA…DEKMETEEEG (69 aa)) is disordered. The segment covering 17–30 (MAKKNKRSQQKNKC) has biased composition (basic residues). A compositionally biased stretch (basic and acidic residues) spans 31-48 (LKPEKDPSTVKRLLEDPP). The span at 65–77 (YGDDEKMETEEEG) shows a compositional bias: acidic residues.

It belongs to the GeBP family.

The protein is Probable transcription factor At1g55950 of Arabidopsis thaliana (Mouse-ear cress).